The chain runs to 569 residues: Glucose-6-phosphate isomerase, cytosolic 2A (569 aa).

Catalysis depends on Glu360, which acts as the Proton donor. Active-site residues include His391 and Lys516.

This sequence belongs to the GPI family. As to quaternary structure, homodimer.

Its subcellular location is the cytoplasm. It carries out the reaction alpha-D-glucose 6-phosphate = beta-D-fructose 6-phosphate. Its pathway is carbohydrate degradation; glycolysis; D-glyceraldehyde 3-phosphate and glycerone phosphate from D-glucose: step 2/4. The polypeptide is Glucose-6-phosphate isomerase, cytosolic 2A (PGIC2-A) (Clarkia lewisii (Farewell-to-spring)).